Here is a 156-residue protein sequence, read N- to C-terminus: MKIQLIAVGTKMPDWVTTGFNEYQRRFPKDMPLELLEIPAGKRGKNADIARILEKEGEQALAAVGKSSRIVTLDLPGKNWTTPQLAQQLESWKQDGRDVALLIGGPEGLSPACKAAAEQSWCLSALTMPHPLVRIVVAESLYRAWSLTTNHPYHRE.

S-adenosyl-L-methionine contacts are provided by residues Leu73, Gly104, and 123–128; that span reads LSALTM.

Belongs to the RNA methyltransferase RlmH family. As to quaternary structure, homodimer.

The protein localises to the cytoplasm. The enzyme catalyses pseudouridine(1915) in 23S rRNA + S-adenosyl-L-methionine = N(3)-methylpseudouridine(1915) in 23S rRNA + S-adenosyl-L-homocysteine + H(+). Specifically methylates the pseudouridine at position 1915 (m3Psi1915) in 23S rRNA. The protein is Ribosomal RNA large subunit methyltransferase H of Tolumonas auensis (strain DSM 9187 / NBRC 110442 / TA 4).